Here is a 213-residue protein sequence, read N- to C-terminus: Small ribosomal subunit protein uS5 (213 aa).

A disordered region spans residues M1–R42. The 64-residue stretch at Y45–V108 folds into the S5 DRBM domain.

It belongs to the universal ribosomal protein uS5 family. In terms of assembly, part of the 30S ribosomal subunit. Contacts proteins S4 and S8.

In terms of biological role, with S4 and S12 plays an important role in translational accuracy. Functionally, located at the back of the 30S subunit body where it stabilizes the conformation of the head with respect to the body. This is Small ribosomal subunit protein uS5 from Corynebacterium urealyticum (strain ATCC 43042 / DSM 7109).